Here is a 712-residue protein sequence, read N- to C-terminus: Polyadenylation factor subunit 2 (712 aa).

Positions 1 to 37 (MTAPTVPADQHGHPLPGPADPAANDTWRPSRYREPLH) are disordered. 7 WD repeats span residues 131–170 (KERS…YESI), 173–213 (VHDD…HGFQ), 214–253 (GHRE…EERS), 256–295 (GHGW…DLST), 298–337 (SSKS…ELEV), 340–380 (GHEK…PSTP), and 387–426 (AHED…GGQE). Disordered stretches follow at residues 446-473 (TKRE…KQQV) and 489-712 (KTGP…DGRR). Gly residues-rich tracts occupy residues 460-469 (AGGGGGGGGD) and 494-504 (TTGGGPSGLPG). The span at 533–545 (QGQAQGGQFPRGR) shows a compositional bias: low complexity. The segment covering 565 to 592 (FADRDRNGGGDRGGMDRDRDSRGGRQDP) has biased composition (basic and acidic residues). Pro residues-rich tracts occupy residues 603 to 612 (GGPPPGPPPG) and 619 to 671 (PPAP…PQGP). Positions 678–712 (GGQGNYGASASGGYGQYGGGGGGGGGGGYGRDGRR) are enriched in gly residues.

Its subcellular location is the nucleus. Required for 3'-end cleavage and polyadenylation of pre-mRNAs. Also involved in chromosome segregation where it has a role in chromosome attachment to the mitotic spindle. In Cryptococcus neoformans var. neoformans serotype D (strain JEC21 / ATCC MYA-565) (Filobasidiella neoformans), this protein is Polyadenylation factor subunit 2 (PFS2).